The primary structure comprises 510 residues: NAD(P)H-quinone oxidoreductase subunit 2 A, chloroplastic (510 aa).

Helical transmembrane passes span Leu24–Leu44, Ile57–Phe77, Ile99–Ile119, Met124–Cys144, Leu149–Tyr169, Tyr183–Gly203, Pro227–Ala247, Trp295–Ile315, Met323–Asp343, Tyr354–Leu374, Ala395–Phe415, Leu418–Leu438, and Met484–Ile504.

This sequence belongs to the complex I subunit 2 family. As to quaternary structure, NDH is composed of at least 16 different subunits, 5 of which are encoded in the nucleus.

The protein localises to the plastid. Its subcellular location is the chloroplast thylakoid membrane. The catalysed reaction is a plastoquinone + NADH + (n+1) H(+)(in) = a plastoquinol + NAD(+) + n H(+)(out). It catalyses the reaction a plastoquinone + NADPH + (n+1) H(+)(in) = a plastoquinol + NADP(+) + n H(+)(out). In terms of biological role, NDH shuttles electrons from NAD(P)H:plastoquinone, via FMN and iron-sulfur (Fe-S) centers, to quinones in the photosynthetic chain and possibly in a chloroplast respiratory chain. The immediate electron acceptor for the enzyme in this species is believed to be plastoquinone. Couples the redox reaction to proton translocation, and thus conserves the redox energy in a proton gradient. The polypeptide is NAD(P)H-quinone oxidoreductase subunit 2 A, chloroplastic (Panax ginseng (Korean ginseng)).